The following is a 353-amino-acid chain: Homeobox protein Mohawk (353 aa).

The span at 18 to 27 (RGTPDRERGS) shows a compositional bias: basic and acidic residues. The interval 18-50 (RGTPDRERGSRTFSGFLDNPHTGPEVGIPDGPP) is disordered. The homeobox; TALE-type DNA-binding region spans 71-132 (VRHKRQALQD…NARRRLKNTV (62 aa)). Disordered regions lie at residues 157–183 (LSVSSDGDSCSEDGENPPRNHMNEEGY) and 243–302 (MGKT…PSKD).

It belongs to the TALE/IRO homeobox family.

It is found in the nucleus. May act as a morphogenetic regulator of cell adhesion. Participates in the early events that lead to differentiation. The polypeptide is Homeobox protein Mohawk (Mkx) (Mus musculus (Mouse)).